We begin with the raw amino-acid sequence, 416 residues long: Phosphoglycerate kinase (416 aa).

(2R)-3-phosphoglycerate is bound by residues V23, D24, F25, N26, Q38, R39, S62, H63, G65, R66, L121, R122, H168, and R169. Residue G212 coordinates ADP. A CDP-binding site is contributed by G212. AMP is bound by residues A213 and K214. A213 is a binding site for ATP. A213 contacts Mg(2+). 2 residues coordinate Mg(2+): A216 and D217. Position 217 (D217) interacts with CDP. K218 contacts AMP. K218 contacts ATP. G236 contributes to the ADP binding site. G236 is a binding site for CDP. AMP is bound by residues G237 and G311. Residues G237 and G311 each contribute to the ATP site. G336 and F341 together coordinate CDP. F341 provides a ligand contact to ADP. AMP is bound at residue E342. ATP is bound by residues E342, D373, and T374. D373 contributes to the Mg(2+) binding site.

It belongs to the phosphoglycerate kinase family. In terms of assembly, monomer. It depends on Mg(2+) as a cofactor.

It is found in the cytoplasm. Its subcellular location is the mitochondrion. It carries out the reaction (2R)-3-phosphoglycerate + ATP = (2R)-3-phospho-glyceroyl phosphate + ADP. It functions in the pathway carbohydrate degradation; glycolysis; pyruvate from D-glyceraldehyde 3-phosphate: step 2/5. Its function is as follows. Catalyzes one of the two ATP producing reactions in the glycolytic pathway via the reversible conversion of 1,3-diphosphoglycerate to 3-phosphoglycerate. Both L- and D- forms of purine and pyrimidine nucleotides can be used as substrates, but the activity is much lower on pyrimidines. Negatively regulates the biosynthesis of acetyl-CoA from pyruvate in the mitochondrion. The polypeptide is Phosphoglycerate kinase (PGK1) (Eremothecium gossypii (strain ATCC 10895 / CBS 109.51 / FGSC 9923 / NRRL Y-1056) (Yeast)).